The chain runs to 439 residues: Acyl-coenzyme A thioesterase 9, mitochondrial (439 aa).

A mitochondrion-targeting transit peptide spans 1–21 (MRRAALRLCALGKGQLTPGRG). HotDog ACOT-type domains are found at residues 84–209 (KDSY…RDSE) and 289–401 (ENSK…EKEV). Lys-103 is modified (N6-acetyllysine).

This sequence belongs to the acyl coenzyme A hydrolase family. As to quaternary structure, interacts with NYAP1, NYAP2 and MYO16.

Its subcellular location is the mitochondrion. The protein resides in the mitochondrion matrix. It localises to the mitochondrion inner membrane. It carries out the reaction butanoyl-CoA + H2O = butanoate + CoA + H(+). It catalyses the reaction propanoyl-CoA + H2O = propanoate + CoA + H(+). The enzyme catalyses hexadecanoyl-CoA + H2O = hexadecanoate + CoA + H(+). The catalysed reaction is octanoyl-CoA + H2O = octanoate + CoA + H(+). It carries out the reaction decanoyl-CoA + H2O = decanoate + CoA + H(+). It catalyses the reaction tetradecanoyl-CoA + H2O = tetradecanoate + CoA + H(+). The enzyme catalyses 4,8-dimethylnonanoyl-CoA + H2O = 4,8-dimethylnonanoate + CoA + H(+). The catalysed reaction is 3-methylbutanoyl-CoA + H2O = 3-methylbutanoate + CoA + H(+). It carries out the reaction 2-methylpropanoyl-CoA + H2O = 2-methylpropanoate + CoA + H(+). It participates in lipid metabolism; fatty acid metabolism. Its activity is regulated as follows. Strongly inhibited by NADH and CoA. In terms of biological role, mitochondrial acyl-CoA thioesterase. Catalyzes the hydrolysis of acyl-CoAs into free fatty acids and coenzyme A (CoA), regulating their respective intracellular levels. Regulates both mitochondrial lipid and amino acid metabolism. This Homo sapiens (Human) protein is Acyl-coenzyme A thioesterase 9, mitochondrial.